The sequence spans 211 residues: MAQAQVFDARTGRRSEMELKGPRFETEPKQHVIHRAVVAELEARRRWTASTRERSEVAGSGAKLYRQKGTGRARAGDIKSPLRHGGGTWGGPKPKGPRYGKKINRKEARAAFDGALSAKAAEGRLYVLDALDFERPSTKRAKELLGQMGVEGPVLLVLDGEEREAALSFRNLPEVTVVGPRGYGVYELLRAREVVFSRAAYGRLTAGREEG.

2 disordered regions span residues 1-28 (MAQAQVFDARTGRRSEMELKGPRFETEP) and 48-99 (TAST…GPRY). A compositionally biased stretch (basic and acidic residues) spans 10–28 (RTGRRSEMELKGPRFETEP).

It belongs to the universal ribosomal protein uL4 family. As to quaternary structure, part of the 50S ribosomal subunit.

In terms of biological role, one of the primary rRNA binding proteins, this protein initially binds near the 5'-end of the 23S rRNA. It is important during the early stages of 50S assembly. It makes multiple contacts with different domains of the 23S rRNA in the assembled 50S subunit and ribosome. Functionally, forms part of the polypeptide exit tunnel. This Rubrobacter xylanophilus (strain DSM 9941 / JCM 11954 / NBRC 16129 / PRD-1) protein is Large ribosomal subunit protein uL4.